A 471-amino-acid polypeptide reads, in one-letter code: Ubiquitin carboxyl-terminal hydrolase calypso (471 aa).

One can recognise a UCH catalytic domain in the interval 45–276; sequence GWLELESDPG…IRFNLMAVVP (232 aa). Catalysis depends on cysteine 131, which acts as the Nucleophile. Histidine 213 (proton donor) is an active-site residue. The interval 307–326 is disordered; that stretch reads DEQGESGNGDSQRPDTPTTL. Residues 314–326 show a composition bias toward polar residues; sequence NGDSQRPDTPTTL. The 29-residue stretch at 375 to 403 folds into the ULD domain; the sequence is NYDKFICTFLSMLAHQGVLGELVSQHLLP. The interval 405 to 471 is positively charged C-terminal tail required for binding nucleosomes; it reads KKVSGQGAAN…KGRNKCRKRK (67 aa). Residues 412 to 471 are disordered; sequence AANRISKQSNTASAGGSTTGASASTPKTQQQQAAAAKNGKSPSKTPGRRRKGRNKCRKRK. A compositionally biased stretch (low complexity) spans 422-447; it reads TASAGGSTTGASASTPKTQQQQAAAA. Residues 457-471 show a composition bias toward basic residues; the sequence is PGRRRKGRNKCRKRK.

This sequence belongs to the peptidase C12 family. BAP1 subfamily. As to quaternary structure, catalytic component of the polycomb repressive deubiquitinase (PR-DUB) complex, at least composed of caly/calypso, Asx and sba (MBD5/6 homolog). The PR-DUB complex associates with nucleosomes to mediate deubiquitination of histone H2AK118ub1 substrates; the association requires the positively charged C-terminal tail of caly, probably due to direct binding of DNA. Interacts (via ULD domain) with Asx (via DEUBAD domain); the interaction produces a stable heterodimer with a composite binding site for ubiquitin. Homodimerizes (via coiled-coil hinge-region between the UCH and ULD domains) to mediate assembly of 2 copies of the caly-Asx heterodimer into a bisymmetric tetramer; dimerization enhances PR-DUB association with nucleosomes.

It localises to the nucleus. It catalyses the reaction Thiol-dependent hydrolysis of ester, thioester, amide, peptide and isopeptide bonds formed by the C-terminal Gly of ubiquitin (a 76-residue protein attached to proteins as an intracellular targeting signal).. Catalytic component of the polycomb repressive deubiquitinase (PR-DUB) complex, a complex that specifically mediates deubiquitination of histone H2A monoubiquitinated at 'Lys-119' (H2AK118ub1). Mediates bisymmetric organization of the PR-DUB complex and is involved in association with nucleosomes to mediate deubiquitination. Does not deubiquitinate monoubiquitinated histone H2B. Required to maintain the transcriptionally repressive state of homeotic genes throughout development. The PR-DUB complex has weak or no activity toward 'Lys-48'- and 'Lys-63'-linked polyubiquitin chains. Polycomb group (PcG) protein. The protein is Ubiquitin carboxyl-terminal hydrolase calypso of Drosophila sechellia (Fruit fly).